A 233-amino-acid chain; its full sequence is Lipoprotein-releasing system ATP-binding protein LolD (233 aa).

In terms of domain architecture, ABC transporter spans 6–233; it reads LQCDNLCKRY…TAELSLMGAE (228 aa). An ATP-binding site is contributed by 42–49; the sequence is GSSGSGKS.

The protein belongs to the ABC transporter superfamily. Lipoprotein translocase (TC 3.A.1.125) family. The complex is composed of two ATP-binding proteins (LolD) and two transmembrane proteins (LolC and LolE).

The protein resides in the cell inner membrane. Functionally, part of the ABC transporter complex LolCDE involved in the translocation of mature outer membrane-directed lipoproteins, from the inner membrane to the periplasmic chaperone, LolA. Responsible for the formation of the LolA-lipoprotein complex in an ATP-dependent manner. Such a release is dependent of the sorting-signal (absence of an Asp at position 2 of the mature lipoprotein) and of LolA. This Escherichia coli (strain K12) protein is Lipoprotein-releasing system ATP-binding protein LolD.